We begin with the raw amino-acid sequence, 269 residues long: Shikimate dehydrogenase (NADP(+)) (269 aa).

Shikimate-binding positions include 15–17 (SLS) and Thr62. Lys66 (proton acceptor) is an active-site residue. Shikimate is bound by residues Asn86 and Asp99. NADP(+) is bound by residues 123 to 127 (GAGGA), 146 to 151 (NRTTAK), and Leu213. A shikimate-binding site is contributed by Tyr215. Gly236 contacts NADP(+).

It belongs to the shikimate dehydrogenase family. In terms of assembly, homodimer.

It carries out the reaction shikimate + NADP(+) = 3-dehydroshikimate + NADPH + H(+). Its pathway is metabolic intermediate biosynthesis; chorismate biosynthesis; chorismate from D-erythrose 4-phosphate and phosphoenolpyruvate: step 4/7. In terms of biological role, involved in the biosynthesis of the chorismate, which leads to the biosynthesis of aromatic amino acids. Catalyzes the reversible NADPH linked reduction of 3-dehydroshikimate (DHSA) to yield shikimate (SA). This is Shikimate dehydrogenase (NADP(+)) from Methanocella arvoryzae (strain DSM 22066 / NBRC 105507 / MRE50).